A 324-amino-acid chain; its full sequence is Beta-ketoacyl-[acyl-carrier-protein] synthase III (324 aa).

Catalysis depends on residues Cys-114 and His-251. The segment at 252–256 is ACP-binding; that stretch reads QANQR. Residue Asn-281 is part of the active site.

Belongs to the thiolase-like superfamily. FabH family. Homodimer.

The protein localises to the cytoplasm. The enzyme catalyses malonyl-[ACP] + acetyl-CoA + H(+) = 3-oxobutanoyl-[ACP] + CO2 + CoA. Its pathway is lipid metabolism; fatty acid biosynthesis. Functionally, catalyzes the condensation reaction of fatty acid synthesis by the addition to an acyl acceptor of two carbons from malonyl-ACP. Catalyzes the first condensation reaction which initiates fatty acid synthesis and may therefore play a role in governing the total rate of fatty acid production. Possesses both acetoacetyl-ACP synthase and acetyl transacylase activities. Its substrate specificity determines the biosynthesis of branched-chain and/or straight-chain of fatty acids. This chain is Beta-ketoacyl-[acyl-carrier-protein] synthase III, found in Rhodospirillum rubrum (strain ATCC 11170 / ATH 1.1.1 / DSM 467 / LMG 4362 / NCIMB 8255 / S1).